Here is a 47-residue protein sequence, read N- to C-terminus: Protein RL9A (47 aa).

The chain crosses the membrane as a helical span at residues 27-47; that stretch reads CMIIVIMIAISIWILTYVLFL.

It is found in the host membrane. This is Protein RL9A (RL9A) from Human cytomegalovirus (strain Merlin) (HHV-5).